Reading from the N-terminus, the 291-residue chain is Porphobilinogen deaminase (291 aa).

At Cys237 the chain carries S-(dipyrrolylmethanemethyl)cysteine.

Belongs to the HMBS family. In terms of assembly, monomer. The cofactor is dipyrromethane.

It catalyses the reaction 4 porphobilinogen + H2O = hydroxymethylbilane + 4 NH4(+). It functions in the pathway porphyrin-containing compound metabolism; protoporphyrin-IX biosynthesis; coproporphyrinogen-III from 5-aminolevulinate: step 2/4. Functionally, tetrapolymerization of the monopyrrole PBG into the hydroxymethylbilane pre-uroporphyrinogen in several discrete steps. The protein is Porphobilinogen deaminase of Clostridium acetobutylicum (strain ATCC 824 / DSM 792 / JCM 1419 / IAM 19013 / LMG 5710 / NBRC 13948 / NRRL B-527 / VKM B-1787 / 2291 / W).